Here is a 112-residue protein sequence, read N- to C-terminus: UPF0342 protein SSA_1465 (112 aa).

This sequence belongs to the UPF0342 family.

The chain is UPF0342 protein SSA_1465 from Streptococcus sanguinis (strain SK36).